A 172-amino-acid chain; its full sequence is Adenine phosphoribosyltransferase (172 aa).

It belongs to the purine/pyrimidine phosphoribosyltransferase family. In terms of assembly, homodimer.

The protein localises to the cytoplasm. The enzyme catalyses AMP + diphosphate = 5-phospho-alpha-D-ribose 1-diphosphate + adenine. It functions in the pathway purine metabolism; AMP biosynthesis via salvage pathway; AMP from adenine: step 1/1. In terms of biological role, catalyzes a salvage reaction resulting in the formation of AMP, that is energically less costly than de novo synthesis. In Rippkaea orientalis (strain PCC 8801 / RF-1) (Cyanothece sp. (strain PCC 8801)), this protein is Adenine phosphoribosyltransferase.